Reading from the N-terminus, the 822-residue chain is DNA gyrase subunit A (822 aa).

One can recognise a Topo IIA-type catalytic domain in the interval 32–497 (LPDVRDGLKP…QVLSLEDEDL (466 aa)). The active-site O-(5'-phospho-DNA)-tyrosine intermediate is Y120. The GyrA-box motif lies at 524-530 (QKRGGRG).

The protein belongs to the type II topoisomerase GyrA/ParC subunit family. As to quaternary structure, heterotetramer, composed of two GyrA and two GyrB chains. In the heterotetramer, GyrA contains the active site tyrosine that forms a transient covalent intermediate with DNA, while GyrB binds cofactors and catalyzes ATP hydrolysis.

The protein resides in the cytoplasm. The enzyme catalyses ATP-dependent breakage, passage and rejoining of double-stranded DNA.. Its function is as follows. A type II topoisomerase that negatively supercoils closed circular double-stranded (ds) DNA in an ATP-dependent manner to modulate DNA topology and maintain chromosomes in an underwound state. Negative supercoiling favors strand separation, and DNA replication, transcription, recombination and repair, all of which involve strand separation. Also able to catalyze the interconversion of other topological isomers of dsDNA rings, including catenanes and knotted rings. Type II topoisomerases break and join 2 DNA strands simultaneously in an ATP-dependent manner. The protein is DNA gyrase subunit A of Streptococcus pneumoniae serotype 4 (strain ATCC BAA-334 / TIGR4).